Here is a 454-residue protein sequence, read N- to C-terminus: Bifunctional protein GlmU (454 aa).

Positions 1-232 (MTDRTCLSIV…VDNVIGINNR (232 aa)) are pyrophosphorylase. UDP-N-acetyl-alpha-D-glucosamine contacts are provided by residues 11–14 (LAAG), Lys25, Gln78, and 83–84 (GT). A Mg(2+)-binding site is contributed by Asp108. Gly144, Glu158, Asn173, and Asn230 together coordinate UDP-N-acetyl-alpha-D-glucosamine. Asn230 lines the Mg(2+) pocket. The segment at 233–253 (VELAEAEAIWQQRKRREMMLA) is linker. Positions 254–454 (GVTLIAPETV…AIKAAKTATK (201 aa)) are N-acetyltransferase. The UDP-N-acetyl-alpha-D-glucosamine site is built by Arg319 and Lys337. His349 functions as the Proton acceptor in the catalytic mechanism. The UDP-N-acetyl-alpha-D-glucosamine site is built by Tyr352 and Asn363. Residues Ala366, 372-373 (NY), Ser391, Ser409, and Arg426 each bind acetyl-CoA.

It in the N-terminal section; belongs to the N-acetylglucosamine-1-phosphate uridyltransferase family. This sequence in the C-terminal section; belongs to the transferase hexapeptide repeat family. Homotrimer. Mg(2+) serves as cofactor.

The protein resides in the cytoplasm. The enzyme catalyses alpha-D-glucosamine 1-phosphate + acetyl-CoA = N-acetyl-alpha-D-glucosamine 1-phosphate + CoA + H(+). The catalysed reaction is N-acetyl-alpha-D-glucosamine 1-phosphate + UTP + H(+) = UDP-N-acetyl-alpha-D-glucosamine + diphosphate. Its pathway is nucleotide-sugar biosynthesis; UDP-N-acetyl-alpha-D-glucosamine biosynthesis; N-acetyl-alpha-D-glucosamine 1-phosphate from alpha-D-glucosamine 6-phosphate (route II): step 2/2. It participates in nucleotide-sugar biosynthesis; UDP-N-acetyl-alpha-D-glucosamine biosynthesis; UDP-N-acetyl-alpha-D-glucosamine from N-acetyl-alpha-D-glucosamine 1-phosphate: step 1/1. The protein operates within bacterial outer membrane biogenesis; LPS lipid A biosynthesis. Catalyzes the last two sequential reactions in the de novo biosynthetic pathway for UDP-N-acetylglucosamine (UDP-GlcNAc). The C-terminal domain catalyzes the transfer of acetyl group from acetyl coenzyme A to glucosamine-1-phosphate (GlcN-1-P) to produce N-acetylglucosamine-1-phosphate (GlcNAc-1-P), which is converted into UDP-GlcNAc by the transfer of uridine 5-monophosphate (from uridine 5-triphosphate), a reaction catalyzed by the N-terminal domain. This is Bifunctional protein GlmU from Brucella anthropi (strain ATCC 49188 / DSM 6882 / CCUG 24695 / JCM 21032 / LMG 3331 / NBRC 15819 / NCTC 12168 / Alc 37) (Ochrobactrum anthropi).